The chain runs to 729 residues: Sodium-dependent neutral amino acid transporter B(0)AT2 (729 aa).

Residues 1-69 (MPKNSKVVKR…ERPAWNSKLQ (69 aa)) lie on the Cytoplasmic side of the membrane. Phosphoserine occurs at positions 25 and 55. The segment at 42–61 (DVQEEKDTDAEDGSEADDER) is disordered. Over residues 43-59 (VQEEKDTDAEDGSEADD) the composition is skewed to acidic residues. Transmembrane regions (helical) follow at residues 70–90 (YILA…FPYL), 98–117 (AYLL…LFFL), and 142–162 (GIGF…NVII). The Extracellular segment spans residues 163–225 (GWTLFYFSQS…SSISDSGGLN (63 aa)). The N-linked (GlcNAc...) asparagine glycan is linked to N187. Transmembrane regions (helical) follow at residues 226 to 244 (WKMT…LAMI) and 253 to 270 (IMYF…CFLI). N-linked (GlcNAc...) asparagine glycosylation occurs at N276. Transmembrane regions (helical) follow at residues 306 to 323 (VFFA…FSSY) and 335 to 356 (VLVS…FAVL). Topologically, residues 357 to 452 (GFKANIVNEK…FIAFTEAMTH (96 aa)) are extracellular. N383 and N394 each carry an N-linked (GlcNAc...) asparagine glycan. A run of 5 helical transmembrane segments spans residues 453–472 (FPAS…NLGL), 496–514 (ILTV…IFVQ), 530–550 (TLPL…VYGI), 571–592 (YMWK…IVNM), and 620–642 (VVCF…IRRC). At 643 to 729 (NLIDDSSGNL…DMPDMPESDL (87 aa)) the chain is on the cytoplasmic side. Phosphoserine is present on residues S687, S699, and S701.

The protein belongs to the sodium:neurotransmitter symporter (SNF) (TC 2.A.22) family. SLC6A15 subfamily. Significant expressed in brain, lung and kidney. In brain, mainly expressed int the cortex, the cerebellum and the brain stem.

It localises to the membrane. It catalyses the reaction L-pipecolate(in) + Na(+)(in) = L-pipecolate(out) + Na(+)(out). The enzyme catalyses L-leucine(in) + Na(+)(in) = L-leucine(out) + Na(+)(out). The catalysed reaction is L-isoleucine(in) + Na(+)(in) = L-isoleucine(out) + Na(+)(out). It carries out the reaction L-methionine(in) + Na(+)(in) = L-methionine(out) + Na(+)(out). It catalyses the reaction L-proline(in) + Na(+)(in) = L-proline(out) + Na(+)(out). The enzyme catalyses L-alanine(in) + Na(+)(in) = L-alanine(out) + Na(+)(out). The catalysed reaction is L-asparagine(in) + Na(+)(in) = L-asparagine(out) + Na(+)(out). It carries out the reaction L-valine(in) + Na(+)(in) = L-valine(out) + Na(+)(out). It catalyses the reaction L-cysteine(in) + Na(+)(in) = L-cysteine(out) + Na(+)(out). The enzyme catalyses L-glutamine(in) + Na(+)(in) = L-glutamine(out) + Na(+)(out). The catalysed reaction is L-serine(in) + Na(+)(in) = L-serine(out) + Na(+)(out). It carries out the reaction L-threonine(in) + Na(+)(in) = L-threonine(out) + Na(+)(out). It catalyses the reaction L-phenylalanine(in) + Na(+)(in) = L-phenylalanine(out) + Na(+)(out). In terms of biological role, functions as a sodium-dependent neutral amino acid transporter. Exhibits preference for methionine and for the branched-chain amino acids, particularly leucine, valine and isoleucine. Can also transport low-affinity substrates such as alanine, phenylalanine, glutamine and pipecolic acid. Mediates the saturable, pH-sensitive and electrogenic cotransport of proline and sodium ions with a stoichiometry of 1:1. May have a role as transporter for neurotransmitter precursors into neurons. In contrast to other members of the neurotransmitter transporter family, does not appear to be chloride-dependent. This Mus musculus (Mouse) protein is Sodium-dependent neutral amino acid transporter B(0)AT2 (Slc6a15).